The chain runs to 138 residues: Small ribosomal subunit protein bS18m (138 aa).

It belongs to the bacterial ribosomal protein bS18 family. In terms of assembly, component of the mitochondrial small ribosomal subunit. Mature mitochondrial ribosomes consist of a small (37S) and a large (54S) subunit. The 37S subunit contains at least 33 different proteins and 1 molecule of RNA (15S). The 54S subunit contains at least 45 different proteins and 1 molecule of RNA (21S).

It localises to the mitochondrion. This chain is Small ribosomal subunit protein bS18m (RSM18), found in Saccharomyces cerevisiae (strain RM11-1a) (Baker's yeast).